Consider the following 295-residue polypeptide: Pyridoxal 5'-phosphate synthase subunit PdxS (295 aa).

D25 serves as a coordination point for D-ribose 5-phosphate. K82 acts as the Schiff-base intermediate with D-ribose 5-phosphate in catalysis. Residue G154 coordinates D-ribose 5-phosphate. R166 is a D-glyceraldehyde 3-phosphate binding site. Residues G215 and 236–237 contribute to the D-ribose 5-phosphate site; that span reads GS.

This sequence belongs to the PdxS/SNZ family. In terms of assembly, in the presence of PdxT, forms a dodecamer of heterodimers.

The catalysed reaction is aldehydo-D-ribose 5-phosphate + D-glyceraldehyde 3-phosphate + L-glutamine = pyridoxal 5'-phosphate + L-glutamate + phosphate + 3 H2O + H(+). It participates in cofactor biosynthesis; pyridoxal 5'-phosphate biosynthesis. Its function is as follows. Catalyzes the formation of pyridoxal 5'-phosphate from ribose 5-phosphate (RBP), glyceraldehyde 3-phosphate (G3P) and ammonia. The ammonia is provided by the PdxT subunit. Can also use ribulose 5-phosphate and dihydroxyacetone phosphate as substrates, resulting from enzyme-catalyzed isomerization of RBP and G3P, respectively. This Listeria monocytogenes serotype 4b (strain CLIP80459) protein is Pyridoxal 5'-phosphate synthase subunit PdxS.